Reading from the N-terminus, the 1029-residue chain is Multiple C2 domain and transmembrane region protein 6 (1029 aa).

The C2 1 domain maps to 1 to 111 (MNKLVVEIVD…SGVQRYPLDK (111 aa)). The segment at 187-224 (TKKKEKESRTFHSIGAHAGGGGGAPPMSQAKQAYPPPP) is disordered. C2 domains follow at residues 277 to 398 (RSSG…PQWY), 437 to 562 (RVSH…PRWF), and 605 to 727 (FSSD…THFY). Residues aspartate 310, aspartate 316, aspartate 363, aspartate 365, and aspartate 371 each coordinate Ca(2+). 2 helical membrane passes run 864–884 (LILVCYPELILPTVFLYLFVI) and 976–996 (FALIWAVFIYVTPFQVIAIII).

Belongs to the MCTP family. Ca(2+) is required as a cofactor. As to expression, expressed in the vascular tissues of cotyledons and rosette leaves. Accumulates in roots caps and shoot apical meristems (SAMs). Observed in flowers.

Its subcellular location is the cell membrane. It localises to the cytoplasm. The protein localises to the endosome membrane. Regulates flowering time under long days. May function as a signaling molecule by regulating the trafficking of other regulators. The polypeptide is Multiple C2 domain and transmembrane region protein 6 (Arabidopsis thaliana (Mouse-ear cress)).